We begin with the raw amino-acid sequence, 142 residues long: Small ribosomal subunit protein bS16 (142 aa).

Residues 101 to 142 (RPSFDALGGDDAGKGEAITQKKKAEKKDEAAAESSSSESTEA) form a disordered region. Low complexity predominate over residues 132-142 (AESSSSESTEA).

The protein belongs to the bacterial ribosomal protein bS16 family.

The polypeptide is Small ribosomal subunit protein bS16 (Streptomyces avermitilis (strain ATCC 31267 / DSM 46492 / JCM 5070 / NBRC 14893 / NCIMB 12804 / NRRL 8165 / MA-4680)).